We begin with the raw amino-acid sequence, 378 residues long: uncharacterized protein (378 aa).

Transmembrane regions (helical) follow at residues 7 to 29 (VTPFFFALALLNLLISLFIRLSQ), 33 to 55 (LFFVSLVFGFVGLTLMGAMYQII), 68 to 85 (VSYLVFFLILVSFYEFYT), 90 to 108 (SGSLFLFLGSLIFFFHLLL), 115 to 137 (PLTVRFLLASMIYLVLSALFLYL), 152 to 174 (LTVGSMLNAIYGVELAWIPMLIM), 204 to 225 (NYKLIALAGLLEFGVALYFLYL), 245 to 267 (IFLFALLFLPLGMLLGIFSASHA), 280 to 302 (LILYGFGAFTIFGGMLHLLPRIV), and 347 to 366 (FSPLHVISTVVYLVIMALFL).

The protein localises to the cell membrane. This is an uncharacterized protein from Aquifex aeolicus (strain VF5).